The chain runs to 252 residues: 2-succinyl-6-hydroxy-2,4-cyclohexadiene-1-carboxylate synthase (252 aa).

Belongs to the AB hydrolase superfamily. MenH family. Monomer.

The catalysed reaction is 5-enolpyruvoyl-6-hydroxy-2-succinyl-cyclohex-3-ene-1-carboxylate = (1R,6R)-6-hydroxy-2-succinyl-cyclohexa-2,4-diene-1-carboxylate + pyruvate. The protein operates within quinol/quinone metabolism; 1,4-dihydroxy-2-naphthoate biosynthesis; 1,4-dihydroxy-2-naphthoate from chorismate: step 3/7. It participates in quinol/quinone metabolism; menaquinone biosynthesis. Functionally, catalyzes a proton abstraction reaction that results in 2,5-elimination of pyruvate from 2-succinyl-5-enolpyruvyl-6-hydroxy-3-cyclohexene-1-carboxylate (SEPHCHC) and the formation of 2-succinyl-6-hydroxy-2,4-cyclohexadiene-1-carboxylate (SHCHC). This is 2-succinyl-6-hydroxy-2,4-cyclohexadiene-1-carboxylate synthase from Escherichia coli (strain UTI89 / UPEC).